Here is a 95-residue protein sequence, read N- to C-terminus: Small ribosomal subunit protein bS6 (95 aa).

This sequence belongs to the bacterial ribosomal protein bS6 family.

Binds together with bS18 to 16S ribosomal RNA. The sequence is that of Small ribosomal subunit protein bS6 from Streptococcus agalactiae serotype Ia (strain ATCC 27591 / A909 / CDC SS700).